Here is a 194-residue protein sequence, read N- to C-terminus: uncharacterized protein (194 aa).

This is an uncharacterized protein from Methanocaldococcus jannaschii (strain ATCC 43067 / DSM 2661 / JAL-1 / JCM 10045 / NBRC 100440) (Methanococcus jannaschii).